A 308-amino-acid chain; its full sequence is KH domain-containing protein At4g26480 (308 aa).

The segment at 1–26 (MMMMTSLGGGAGGGGGGGGSGGGRFV) is disordered. The span at 7–24 (LGGGAGGGGGGGGSGGGR) shows a compositional bias: gly residues. One can recognise a KH domain in the interval 165–232 (DIPVDKYPNY…EHLNEPLHIL (68 aa)). The interval 284–308 (EEGSPMSGSISPYNSLGMKRAKTRG) is disordered. Serine 294 is subject to Phosphoserine.

It localises to the nucleus. In Arabidopsis thaliana (Mouse-ear cress), this protein is KH domain-containing protein At4g26480.